A 560-amino-acid chain; its full sequence is Eukaryotic translation initiation factor 3 subunit D-1 (560 aa).

The tract at residues 98 to 166 (VQKPPHQRGR…RGPPPKMRES (69 aa)) is disordered. A compositionally biased stretch (basic residues) spans 100–121 (KPPHQRGRFRNMRNSRSGRGRN). A Phosphothreonine modification is found at Thr-128. A compositionally biased stretch (basic residues) spans 147–156 (GRGMGKKFGH). Residues 291–305 (EFDLLTVNESSVEPP) form an RNA gate region.

Belongs to the eIF-3 subunit D family. Component of the eukaryotic translation initiation factor 3 (eIF-3) complex. The eIF-3 complex interacts with pix.

Its subcellular location is the cytoplasm. Functionally, mRNA cap-binding component of the eukaryotic translation initiation factor 3 (eIF-3) complex, which is involved in protein synthesis of a specialized repertoire of mRNAs and, together with other initiation factors, stimulates binding of mRNA and methionyl-tRNAi to the 40S ribosome. The eIF-3 complex specifically targets and initiates translation of a subset of mRNAs involved in cell proliferation. In the eIF-3 complex, eif3d specifically recognizes and binds the 7-methylguanosine cap of a subset of mRNAs. This chain is Eukaryotic translation initiation factor 3 subunit D-1, found in Drosophila sechellia (Fruit fly).